The following is a 469-amino-acid chain: MNKIDELTPKKVVEKLDNYIIGQKEAKKQVAIALRNRIRRLSLSEDVRKDVIPKNILMIGSTGVGKTEIARRLAEVANAPFVKVEATRFTEVGYVGKNVESMVRELVDSSVNMVKKEMMEEVKDKAQRLVEERIVEVLVPSKKRAKAQPSFMDVMQLFNQNAEYSQNKDYDENEDENIRRRREELLEKLRNGELEDVEIEVEVEEQSSPMFAGLGPELEDMGIQFGEMFQNLMPKKKKRRRMKISEARKVLEPIESEKLIDQDKLIQEGVSRAENSGIIFIDEIDKITSKGVSSGPDVSREGVQRDLLPIVEGTTVMTKYGSISTDYILFIAAGAFSEAKPSDLIPELQGRFPIRAELSDLTKEDFIRILTQPKNAILKQYQYLLQTDGVKIEFTEDGVERMADIAFELNEKVENIGARRLYTVVEKVLEEVSFEAPASGEWELKIDSNYVDLRLGKVYGDEDLREYIL.

ATP is bound by residues I21, 63-68, D282, E347, and R419; that span reads GVGKTE.

It belongs to the ClpX chaperone family. HslU subfamily. As to quaternary structure, a double ring-shaped homohexamer of HslV is capped on each side by a ring-shaped HslU homohexamer. The assembly of the HslU/HslV complex is dependent on binding of ATP.

The protein resides in the cytoplasm. ATPase subunit of a proteasome-like degradation complex; this subunit has chaperone activity. The binding of ATP and its subsequent hydrolysis by HslU are essential for unfolding of protein substrates subsequently hydrolyzed by HslV. HslU recognizes the N-terminal part of its protein substrates and unfolds these before they are guided to HslV for hydrolysis. In Petrotoga mobilis (strain DSM 10674 / SJ95), this protein is ATP-dependent protease ATPase subunit HslU.